A 171-amino-acid chain; its full sequence is uncharacterized protein (171 aa).

Functionally, required for production of the bacteriocin SkfA. This is an uncharacterized protein from Bacillus subtilis (strain 168).